A 311-amino-acid chain; its full sequence is Methionyl-tRNA formyltransferase (311 aa).

Position 110–113 (S110–P113) interacts with (6S)-5,6,7,8-tetrahydrofolate.

It belongs to the Fmt family.

The catalysed reaction is L-methionyl-tRNA(fMet) + (6R)-10-formyltetrahydrofolate = N-formyl-L-methionyl-tRNA(fMet) + (6S)-5,6,7,8-tetrahydrofolate + H(+). Attaches a formyl group to the free amino group of methionyl-tRNA(fMet). The formyl group appears to play a dual role in the initiator identity of N-formylmethionyl-tRNA by promoting its recognition by IF2 and preventing the misappropriation of this tRNA by the elongation apparatus. This chain is Methionyl-tRNA formyltransferase, found in Sulfurihydrogenibium sp. (strain YO3AOP1).